Here is a 25-residue protein sequence, read N- to C-terminus: Zinc metalloproteinase-disintegrin-like daborhagin-M (25 aa).

One can recognise a Peptidase M12B domain in the interval 14 to 25; sequence SYVELIITVDHS. Glu-17 lines the Ca(2+) pocket.

It belongs to the venom metalloproteinase (M12B) family. P-III subfamily. P-IIIa sub-subfamily. Monomer. The cofactor is Zn(2+). N-glycosylated. Post-translationally, contains 16 disulfide bonds. Expressed by the venom gland.

It is found in the secreted. Its activity is regulated as follows. Inhibited by EDTA, EGTA and 1,10-phenanthroline. Addition of Mg(2+) or Ca(2+) increases the casein hydrolysis rate. In terms of biological role, snake venom zinc metalloprotease that possesses high hemorrhagic activity (minimum hemorrhagic dose, MHD=0.86 ug) when subcutaneously injected into mice. Has potent fibrinogenolytic activity on alpha-chain of fibrinogen (FGA). Hydrolyzes model substrate (beta-chain of insulin) at Ala(14)-Leu(15) and Tyr(16)-Leu(17) followed by His(10)-Leu(11) and Phe(24)-Phe(25). The chain is Zinc metalloproteinase-disintegrin-like daborhagin-M from Daboia siamensis (Eastern Russel's viper).